A 448-amino-acid chain; its full sequence is Probable glycine dehydrogenase (decarboxylating) subunit 1 (448 aa).

The protein belongs to the GcvP family. N-terminal subunit subfamily. In terms of assembly, the glycine cleavage system is composed of four proteins: P, T, L and H. In this organism, the P 'protein' is a heterodimer of two subunits.

It carries out the reaction N(6)-[(R)-lipoyl]-L-lysyl-[glycine-cleavage complex H protein] + glycine + H(+) = N(6)-[(R)-S(8)-aminomethyldihydrolipoyl]-L-lysyl-[glycine-cleavage complex H protein] + CO2. In terms of biological role, the glycine cleavage system catalyzes the degradation of glycine. The P protein binds the alpha-amino group of glycine through its pyridoxal phosphate cofactor; CO(2) is released and the remaining methylamine moiety is then transferred to the lipoamide cofactor of the H protein. This Rhodospirillum rubrum (strain ATCC 11170 / ATH 1.1.1 / DSM 467 / LMG 4362 / NCIMB 8255 / S1) protein is Probable glycine dehydrogenase (decarboxylating) subunit 1.